The chain runs to 156 residues: Transcription antitermination protein NusB (156 aa).

The protein belongs to the NusB family.

Its function is as follows. Involved in transcription antitermination. Required for transcription of ribosomal RNA (rRNA) genes. Binds specifically to the boxA antiterminator sequence of the ribosomal RNA (rrn) operons. The sequence is that of Transcription antitermination protein NusB from Vibrio cholerae serotype O1 (strain ATCC 39541 / Classical Ogawa 395 / O395).